The following is a 294-amino-acid chain: HTH-type transcriptional regulator ClcR (294 aa).

Positions 1 to 58 constitute an HTH lysR-type domain; it reads MEFRQLRYFIAVAEEGNIGAAARRLHISQPPITRQIQALEQDLGVVLFERTHRGVELT. A DNA-binding region (H-T-H motif) is located at residues 18-37; it reads IGAAARRLHISQPPITRQIQ.

Belongs to the LysR transcriptional regulatory family.

The protein localises to the cytoplasm. Involved in regulation of chlorinated catechol metabolism. Transcriptional activator of the clcABD chlorocatechol oxidative operon. This is HTH-type transcriptional regulator ClcR (clcR) from Pseudomonas putida (Arthrobacter siderocapsulatus).